An 89-amino-acid polypeptide reads, in one-letter code: MFGLSPAQLIILLVVILLIFGTKKLRNAGSDLGAAVKGFKKAMKEDEKVKDAEFKSIDNETASAKKGKYKRERNRLNPCLILVFQNLFY.

Residues M1 to G21 traverse the membrane as a helical segment.

This sequence belongs to the TatA/E family. The Tat system comprises two distinct complexes: a TatABC complex, containing multiple copies of TatA, TatB and TatC subunits, and a separate TatA complex, containing only TatA subunits. Substrates initially bind to the TatABC complex, which probably triggers association of the separate TatA complex to form the active translocon.

The protein localises to the cell inner membrane. Part of the twin-arginine translocation (Tat) system that transports large folded proteins containing a characteristic twin-arginine motif in their signal peptide across membranes. TatA could form the protein-conducting channel of the Tat system. The chain is Sec-independent protein translocase protein TatA from Haemophilus influenzae (strain ATCC 51907 / DSM 11121 / KW20 / Rd).